An 88-amino-acid chain; its full sequence is Small ribosomal subunit protein bS16 (88 aa).

The protein belongs to the bacterial ribosomal protein bS16 family.

The polypeptide is Small ribosomal subunit protein bS16 (Geobacter sulfurreducens (strain ATCC 51573 / DSM 12127 / PCA)).